Consider the following 207-residue polypeptide: Probable RNA 2'-phosphotransferase (207 aa).

It belongs to the KptA/TPT1 family.

Its function is as follows. Removes the 2'-phosphate from RNA via an intermediate in which the phosphate is ADP-ribosylated by NAD followed by a presumed transesterification to release the RNA and generate ADP-ribose 1''-2''-cyclic phosphate (APPR&gt;P). May function as an ADP-ribosylase. The sequence is that of Probable RNA 2'-phosphotransferase from Methanosarcina acetivorans (strain ATCC 35395 / DSM 2834 / JCM 12185 / C2A).